The chain runs to 555 residues: MATSAVVNCLGGVRPHTIRYEPNMWTHTFSNFSIDEQVQGEYAEEIEALKQEVRSMLTAATTCKEQLILIDTLERLGLSYHFETEIEQKLKEIILHINREEDASGGDCDLYTTSLGFRVIRQHQYHISCGVFEKYLDKDGKFEESLSSDTEGILSLYEAAHVRFRDETLLQEAARFSRHHLKGMEEVLESPLREKVQRALQHPLHRDIPIFYAHFFISNIYQKDDSRNELLLKLAKSNFMFLQNLYKEELSQLSRWWNKFDLKSKLPYARDRLVEAYIWGVGYHYEPRYAYVRRGLVIGIQIIAIMDDTYDNYATVDEAQLFTEMFERWSMDGIDGVPDYLKIAYHFVVSAFEDYERDAGKLGKQFAAPYFKQTIQQLARAYNQELKWVMGTQSMPSFQDYAKNSEITSCIYIMSASVFHGLESVTQETIDWLKNEPNFAVSTGMIGRYWDDIGSHERESRGGKMLTAVGCYMKQYGVSKKEAVRKFREQVEDLWKDVNKGYTAMTCMPRETAVLFLNYARMCDASYTENNDDGYTDPDFSKRKISALFLDPLVF.

Positions 270, 307, 311, 448, and 451 each coordinate (2E,6E)-farnesyl diphosphate. Residues aspartate 307 and aspartate 311 each coordinate Mg(2+). Positions 307 to 311 (DDTYD) match the DDXXD motif motif. Aspartate 451, serine 455, and glutamate 459 together coordinate Mg(2+).

It belongs to the terpene synthase family. It depends on Mg(2+) as a cofactor.

The enzyme catalyses (2E,6E)-farnesyl diphosphate + H2O = tau-cadinol + diphosphate. It catalyses the reaction (2E,6E)-farnesyl diphosphate = (+)-gamma-cadinene + diphosphate. It functions in the pathway secondary metabolite biosynthesis; terpenoid biosynthesis. Functionally, sesquiterpene synthase that catalyzes the formation of sesquiterpenes and sesquiterpenoid alcohols. Converts farnesyl diphosphate (FPP) to tau-cadinol. Converts FPP to gamma-cadinene. Tau-cadinol is the major product. The protein is Tau-cadinol synthase of Lavandula angustifolia (Lavender).